The following is a 186-amino-acid chain: NADH-quinone oxidoreductase subunit B (186 aa).

[4Fe-4S] cluster is bound by residues Cys44, Cys45, Cys110, and Cys139.

This sequence belongs to the complex I 20 kDa subunit family. NDH-1 is composed of 14 different subunits. Subunits NuoB, C, D, E, F, and G constitute the peripheral sector of the complex. [4Fe-4S] cluster serves as cofactor.

The protein resides in the cell inner membrane. It carries out the reaction a quinone + NADH + 5 H(+)(in) = a quinol + NAD(+) + 4 H(+)(out). NDH-1 shuttles electrons from NADH, via FMN and iron-sulfur (Fe-S) centers, to quinones in the respiratory chain. The immediate electron acceptor for the enzyme in this species is believed to be ubiquinone. Couples the redox reaction to proton translocation (for every two electrons transferred, four hydrogen ions are translocated across the cytoplasmic membrane), and thus conserves the redox energy in a proton gradient. This chain is NADH-quinone oxidoreductase subunit B, found in Leptospira interrogans serogroup Icterohaemorrhagiae serovar copenhageni (strain Fiocruz L1-130).